A 361-amino-acid chain; its full sequence is Protein YIM1-2 (361 aa).

Belongs to the YIM1 family.

It is found in the lipid droplet. Its subcellular location is the mitochondrion. The polypeptide is Protein YIM1-2 (YIM1-2) (Lachancea thermotolerans (strain ATCC 56472 / CBS 6340 / NRRL Y-8284) (Yeast)).